We begin with the raw amino-acid sequence, 436 residues long: RNA-binding motif, single-stranded-interacting protein 3 (436 aa).

The interval 28 to 56 (APAPHPMAPPSPSTNSSSNNSSNNSSGEQ) is disordered. Over residues 30–39 (APHPMAPPSP) the composition is skewed to pro residues. Over residues 40–53 (STNSSSNNSSNNSS) the composition is skewed to low complexity. 2 RRM domains span residues 60–133 (TNLY…MAKQ) and 139–224 (TNLY…FADG). Positions 398 to 421 (TSPQTVAPSSQDTSGQQQQIAVDT) are enriched in polar residues. A disordered region spans residues 398–436 (TSPQTVAPSSQDTSGQQQQIAVDTSNEHAPAYSYQQSKP).

Its subcellular location is the cytoplasm. In terms of biological role, binds poly(A) and poly(U) oligoribonucleotides. The protein is RNA-binding motif, single-stranded-interacting protein 3 (RBMS3) of Pongo abelii (Sumatran orangutan).